Here is a 292-residue protein sequence, read N- to C-terminus: NAD kinase (292 aa).

The active-site Proton acceptor is the aspartate 73. Residues 73-74, 147-148, histidine 158, arginine 175, aspartate 177, 188-193, and glutamine 247 each bind NAD(+); these read DG, NE, and TAYSLS.

It belongs to the NAD kinase family. The cofactor is a divalent metal cation.

It is found in the cytoplasm. It carries out the reaction NAD(+) + ATP = ADP + NADP(+) + H(+). Its function is as follows. Involved in the regulation of the intracellular balance of NAD and NADP, and is a key enzyme in the biosynthesis of NADP. Catalyzes specifically the phosphorylation on 2'-hydroxyl of the adenosine moiety of NAD to yield NADP. In Salmonella agona (strain SL483), this protein is NAD kinase.